The chain runs to 91 residues: MSKGQSLQDPFLNALRRERVPVSVYLVNGIKLQGTIESFDQFVVLLRNTVSQMVYKHAISTVVPARNVKVGPGGGYVQSGEGGQAGDEADE.

Residues 9–68 (DPFLNALRRERVPVSVYLVNGIKLQGTIESFDQFVVLLRNTVSQMVYKHAISTVVPARNV) enclose the Sm domain.

It belongs to the Hfq family. As to quaternary structure, homohexamer.

Functionally, RNA chaperone that binds small regulatory RNA (sRNAs) and mRNAs to facilitate mRNA translational regulation in response to envelope stress, environmental stress and changes in metabolite concentrations. Also binds with high specificity to tRNAs. The sequence is that of RNA-binding protein Hfq from Stenotrophomonas maltophilia (strain K279a).